A 368-amino-acid chain; its full sequence is 3-dehydroquinate synthase (368 aa).

NAD(+) is bound by residues 112 to 116 (GVIGD), 136 to 137 (TT), K149, and K158. E191, H256, and H273 together coordinate Zn(2+).

Belongs to the sugar phosphate cyclases superfamily. Dehydroquinate synthase family. The cofactor is Co(2+). Zn(2+) is required as a cofactor. NAD(+) serves as cofactor.

The protein localises to the cytoplasm. The catalysed reaction is 7-phospho-2-dehydro-3-deoxy-D-arabino-heptonate = 3-dehydroquinate + phosphate. Its pathway is metabolic intermediate biosynthesis; chorismate biosynthesis; chorismate from D-erythrose 4-phosphate and phosphoenolpyruvate: step 2/7. Catalyzes the conversion of 3-deoxy-D-arabino-heptulosonate 7-phosphate (DAHP) to dehydroquinate (DHQ). The sequence is that of 3-dehydroquinate synthase from Prochlorococcus marinus (strain NATL1A).